The sequence spans 141 residues: Galactose-6-phosphate isomerase subunit LacA (141 aa).

It belongs to the LacAB/RpiB family. In terms of assembly, heteromultimeric protein consisting of LacA and LacB.

The enzyme catalyses aldehydo-D-galactose 6-phosphate = keto-D-tagatose 6-phosphate. It participates in carbohydrate metabolism; D-galactose 6-phosphate degradation; D-tagatose 6-phosphate from D-galactose 6-phosphate: step 1/1. The chain is Galactose-6-phosphate isomerase subunit LacA from Streptococcus pneumoniae serotype 4 (strain ATCC BAA-334 / TIGR4).